The following is a 303-amino-acid chain: Mitochondrial carrier homolog 2 (303 aa).

Residue A2 is modified to N-acetylalanine. The Mitochondrial intermembrane segment spans residues 2–15 (ADAASQVLLGSGLT). Solcar repeat units follow at residues 2 to 98 (ADAA…YQES) and 118 to 206 (DRVI…INTY). A helical transmembrane segment spans residues 16-36 (ILSQPLMYVKVLIQVGYEPLP). Residues 37–77 (PTIGRNIFGRQVCQLPGLFCYAQHIASIDGRRGLFTGLTPR) are Cytoplasmic-facing. A helical transmembrane segment spans residues 78–92 (LCSGVLGTVVHGKVL). The Mitochondrial intermembrane segment spans residues 93–135 (QYYQESEKPEELGSVTVQKEYSSSFDRVIKETTREMIARSAAT). The helical transmembrane segment at 136–156 (LITHPFHVITLRSMVQFIGRE) threads the bilayer. Over 157–180 (SKYCGLCDSIVTIYREEGIVGFFA) the chain is Cytoplasmic. A helical membrane pass occupies residues 181-199 (GLIPRLLGDIISLWLCNSL). The Mitochondrial intermembrane segment spans residues 200-231 (AYLINTYALDSGVSTMNEMKSYSQAVTGFFAS). A helical transmembrane segment spans residues 232–252 (MLTYPFVLVSNLMAVNNCGLA). Topologically, residues 253–280 (GGSPPYSPIYTSWIDCWCMLQKAGNMSR) are cytoplasmic. The helical transmembrane segment at 281-303 (GNSLFFRKVPCGKTYCYDLRMLI) threads the bilayer.

It belongs to the mitochondrial carrier (TC 2.A.29) family. Interacts with p15BID. As to expression, expressed in a wide variety of tissues. Predominant expressed in liver, kidney, heart, skeletal muscle and testis.

The protein resides in the mitochondrion outer membrane. Functionally, protein insertase that mediates insertion of transmembrane proteins into the mitochondrial outer membrane. Catalyzes insertion of proteins with alpha-helical transmembrane regions, such as signal-anchored, tail-anchored and multi-pass membrane proteins. Does not mediate insertion of beta-barrel transmembrane proteins. Also acts as a receptor for the truncated form of pro-apoptotic BH3-interacting domain death agonist (p15 BID) and has therefore a critical function in apoptosis. Regulates the quiescence/cycling of hematopoietic stem cells (HSCs). Acts as a regulator of mitochondrial fusion, essential for the naive-to-primed interconversion of embryonic stem cells (ESCs). Acts as a regulator of lipid homeostasis and has a regulatory role in adipocyte differentiation and biology. This chain is Mitochondrial carrier homolog 2, found in Mus musculus (Mouse).